Here is a 480-residue protein sequence, read N- to C-terminus: Adenylosuccinate lyase (480 aa).

AMP is bound by residues Arg-14, Tyr-15, Arg-79, His-80, and Asp-81. Position 80 (His-80) interacts with fumarate. His-153 functions as the Proton donor/acceptor in the catalytic mechanism. An AMP-binding site is contributed by Gln-236. Fumarate is bound at residue Gln-236. A N(6)-(1,2-dicarboxyethyl)-AMP-binding site is contributed by Gln-236. Ser-284 (proton donor/acceptor) is an active-site residue. Ser-285, Lys-290, and Asn-292 together coordinate fumarate. Positions 285, 290, and 292 each coordinate N(6)-(1,2-dicarboxyethyl)-AMP. An AMP-binding site is contributed by Arg-298. The N(6)-(1,2-dicarboxyethyl)-AMP site is built by Arg-324, Ser-329, and Arg-333. Residues Ser-329 and Arg-333 each coordinate AMP.

Belongs to the lyase 1 family. Adenylosuccinate lyase subfamily. As to quaternary structure, homotetramer.

The catalysed reaction is N(6)-(1,2-dicarboxyethyl)-AMP = fumarate + AMP. It participates in purine metabolism; AMP biosynthesis via salvage pathway. Its function is as follows. Catalyzes conversion of succinyladenosine monophosphate (SAMP) to AMP and fumarate on the purine salvage pathway. The protein is Adenylosuccinate lyase of Schistosoma mansoni (Blood fluke).